The primary structure comprises 223 residues: ATP-dependent dethiobiotin synthetase BioD (223 aa).

12-17 (EIGKTH) contacts ATP. Thr16 lines the Mg(2+) pocket. Lys37 is an active-site residue. Ser41 contributes to the substrate binding site. ATP is bound by residues Asp52 and 118 to 121 (EGVG). 2 residues coordinate Mg(2+): Asp52 and Glu118.

It belongs to the dethiobiotin synthetase family. As to quaternary structure, homodimer. Requires Mg(2+) as cofactor.

The protein localises to the cytoplasm. It carries out the reaction (7R,8S)-7,8-diammoniononanoate + CO2 + ATP = (4R,5S)-dethiobiotin + ADP + phosphate + 3 H(+). Its pathway is cofactor biosynthesis; biotin biosynthesis; biotin from 7,8-diaminononanoate: step 1/2. In terms of biological role, catalyzes a mechanistically unusual reaction, the ATP-dependent insertion of CO2 between the N7 and N8 nitrogen atoms of 7,8-diaminopelargonic acid (DAPA, also called 7,8-diammoniononanoate) to form a ureido ring. In Acidiphilium cryptum (strain JF-5), this protein is ATP-dependent dethiobiotin synthetase BioD.